We begin with the raw amino-acid sequence, 62 residues long: Large ribosomal subunit protein uL29 (62 aa).

This sequence belongs to the universal ribosomal protein uL29 family.

The polypeptide is Large ribosomal subunit protein uL29 (Helicobacter hepaticus (strain ATCC 51449 / 3B1)).